The primary structure comprises 176 residues: RNA pyrophosphohydrolase (176 aa).

Residues glycine 6 to lysine 149 enclose the Nudix hydrolase domain. The Nudix box motif lies at glycine 38–glycine 59.

Belongs to the Nudix hydrolase family. RppH subfamily. The cofactor is a divalent metal cation.

Accelerates the degradation of transcripts by removing pyrophosphate from the 5'-end of triphosphorylated RNA, leading to a more labile monophosphorylated state that can stimulate subsequent ribonuclease cleavage. The chain is RNA pyrophosphohydrolase from Klebsiella pneumoniae (strain 342).